A 233-amino-acid polypeptide reads, in one-letter code: MAGKRTRKINEGVDPTKLYALTTAIGMVKERAVAKFDETIEVSMNLGVDPRHADQMVRGVVNLPNGTGRTVRVAVFARGAKADEAKAAGADVVGAEDLVEIVQGGKIEFDRCIATPDMMPLVGRLGKVLGPRGMMPNPKVGTVTMDVAGAVKASKGGAVEFRVEKAGIVHAGIGKASFDAKALEENIRAFADAVIKAKPAGAKGNYVKRVAISSTMGPGVKIEVGSVTAAPTA.

This sequence belongs to the universal ribosomal protein uL1 family. Part of the 50S ribosomal subunit.

In terms of biological role, binds directly to 23S rRNA. The L1 stalk is quite mobile in the ribosome, and is involved in E site tRNA release. Functionally, protein L1 is also a translational repressor protein, it controls the translation of the L11 operon by binding to its mRNA. The chain is Large ribosomal subunit protein uL1 from Rhizobium etli (strain ATCC 51251 / DSM 11541 / JCM 21823 / NBRC 15573 / CFN 42).